The primary structure comprises 583 residues: Thiol:disulfide interchange protein DsbD (583 aa).

The first 20 residues, 1–20 (MLKRFIFLLVGITLTLSAHA), serve as a signal peptide directing secretion. 2 cysteine pairs are disulfide-bonded: Cys-123–Cys-128 and Cys-200–Cys-322. 8 helical membrane passes run 185–205 (IFWFFLLGIGLAFTPCVLPML), 237–257 (LTYTLLGLVVAAIGLPFQVAL), 261–281 (PVLISLAILFTILAASMFGLF), 302–322 (GGAFGSVFVMGMIAGLVASPC), 344–364 (GLALYLLALGMGIPLILITLF), 375–395 (WLLKVKTAFGFVMLALPVFLL), 405–425 (PLMWSALAMVFVGWLISVIPT), and 433–453 (VRIVLFLTFAVASYPWANLVW). The 144-residue stretch at 440-583 (TFAVASYPWA…NQFLNWLNQL (144 aa)) folds into the Thioredoxin domain. Residues Cys-500 and Cys-503 are joined by a disulfide bond.

The protein belongs to the thioredoxin family. DsbD subfamily.

It localises to the cell inner membrane. The enzyme catalyses [protein]-dithiol + NAD(+) = [protein]-disulfide + NADH + H(+). It carries out the reaction [protein]-dithiol + NADP(+) = [protein]-disulfide + NADPH + H(+). Functionally, required to facilitate the formation of correct disulfide bonds in some periplasmic proteins and for the assembly of the periplasmic c-type cytochromes. Acts by transferring electrons from cytoplasmic thioredoxin to the periplasm. This transfer involves a cascade of disulfide bond formation and reduction steps. The sequence is that of Thiol:disulfide interchange protein DsbD from Actinobacillus pleuropneumoniae serotype 5b (strain L20).